Here is a 69-residue protein sequence, read N- to C-terminus: U5-agatoxin-Ao1a (69 aa).

The N-terminal stretch at 1–20 (MRTIISLLLLSAMVFAVIEA) is a signal peptide. Positions 21-34 (ISLEEGLQLFEGER) are excised as a propeptide. 2 cysteine pairs are disulfide-bonded: Cys36–Cys52 and Cys43–Cys57.

Belongs to the neurotoxin 01 (U2-agtx) family. Post-translationally, does not contain a cysteine at position 61 which disrupts the cysteine framework. Expressed by the venom gland.

The protein resides in the secreted. The polypeptide is U5-agatoxin-Ao1a (Agelena orientalis (Funnel-web spider)).